Consider the following 75-residue polypeptide: Small capsomere-interacting protein (75 aa).

It belongs to the herpesviridae small capsomere-interacting protein family. As to quaternary structure, interacts with the major capsid protein/MCP.

It localises to the virion. Its subcellular location is the host nucleus. Its function is as follows. Participates in the assembly of the infectious particles by decorating the outer surface of the capsid shell and thus forming a layer between the capsid and the tegument. Complexes composed of the major capsid protein and small capsomere-interacting protein/SCP assemble together in the host cytoplasm and are translocated to the nucleus, where they accumulate and participate in capsid assembly. The chain is Small capsomere-interacting protein from Homo sapiens (Human).